The following is a 141-amino-acid chain: Large ribosomal subunit protein uL11 (141 aa).

Belongs to the universal ribosomal protein uL11 family. As to quaternary structure, part of the ribosomal stalk of the 50S ribosomal subunit. Interacts with L10 and the large rRNA to form the base of the stalk. L10 forms an elongated spine to which L12 dimers bind in a sequential fashion forming a multimeric L10(L12)X complex. One or more lysine residues are methylated.

Its function is as follows. Forms part of the ribosomal stalk which helps the ribosome interact with GTP-bound translation factors. This Shouchella clausii (strain KSM-K16) (Alkalihalobacillus clausii) protein is Large ribosomal subunit protein uL11.